A 222-amino-acid polypeptide reads, in one-letter code: Charged multivesicular body protein 4a (222 aa).

Disordered stretches follow at residues 1–21 (MSGLGRLFGKGKKEKGPTPEE) and 180–211 (VGDKEEEPSVKLPSVPSTHLPAGPAPKVDEDE). Positions 1 to 116 (MSGLGRLFGK…ELAAQSMKKA (116 aa)) are interaction with phosphoinosides. An intramolecular interaction with C-terminus region spans residues 1-150 (MSGLGRLFGK…QISDAISRPM (150 aa)). 2 coiled-coil regions span residues 20–105 (EEAI…VLRT) and 155–180 (DVDEDELLEELEELEQEELAQELLNV). The intramolecular interaction with N-terminus stretch occupies residues 151–222 (GFGDDVDEDE…ALKQLAEWVS (72 aa)). S196 carries the post-translational modification Phosphoserine.

This sequence belongs to the SNF7 family. Probable core component of the endosomal sorting required for transport complex III (ESCRT-III). ESCRT-III components are thought to multimerize to form a flat lattice on the perimeter membrane of the endosome. Several assembly forms of ESCRT-III may exist that interact and act sequentially. Self-associates; overexpression leads to the assembly of filaments that curve and associate to create circular rings. Interacts with CHMP2A. Interacts with CHMP3; the interaction requires the release of CHMP4A autoinhibition. Interacts with CHMP4B. Interacts with CHMP4C. Interacts with CHMP6. Interacts with VPS4A. Interacts with PDCD6IP; the interaction is direct. As to expression, widely expressed. Expressed at higher level in heart, kidney, liver and skeletal muscle. Also expressed in brain, placenta, lung and pancreas.

It localises to the cytoplasmic vesicle membrane. The protein resides in the late endosome membrane. In terms of biological role, probable core component of the endosomal sorting required for transport complex III (ESCRT-III) which is involved in multivesicular bodies (MVBs) formation and sorting of endosomal cargo proteins into MVBs. MVBs contain intraluminal vesicles (ILVs) that are generated by invagination and scission from the limiting membrane of the endosome and mostly are delivered to lysosomes enabling degradation of membrane proteins, such as stimulated growth factor receptors, lysosomal enzymes and lipids. The MVB pathway appears to require the sequential function of ESCRT-O, -I,-II and -III complexes. ESCRT-III proteins mostly dissociate from the invaginating membrane before the ILV is released. The ESCRT machinery also functions in topologically equivalent membrane fission events, such as the terminal stages of cytokinesis and the budding of enveloped viruses (HIV-1 and other lentiviruses). ESCRT-III proteins are believed to mediate the necessary vesicle extrusion and/or membrane fission activities, possibly in conjunction with the AAA ATPase VPS4. When overexpressed, membrane-assembled circular arrays of CHMP4A filaments can promote or stabilize negative curvature and outward budding. Via its interaction with PDCD6IP involved in HIV-1 p6- and p9-dependent virus release. CHMP4A/B/C are required for the exosomal release of SDCBP, CD63 and syndecan. This is Charged multivesicular body protein 4a (CHMP4A) from Homo sapiens (Human).